The following is a 79-amino-acid chain: NADH-ubiquinone oxidoreductase chain 5 (79 aa).

Transmembrane regions (helical) follow at residues 5–27 and 40–57; these read TPIMMTTLISLTLPIFATLTNPY and VMYAFITSLPSTTLFILS.

The protein belongs to the complex I subunit 5 family. In terms of assembly, core subunit of respiratory chain NADH dehydrogenase (Complex I) which is composed of 45 different subunits.

Its subcellular location is the mitochondrion inner membrane. The enzyme catalyses a ubiquinone + NADH + 5 H(+)(in) = a ubiquinol + NAD(+) + 4 H(+)(out). In terms of biological role, core subunit of the mitochondrial membrane respiratory chain NADH dehydrogenase (Complex I) which catalyzes electron transfer from NADH through the respiratory chain, using ubiquinone as an electron acceptor. Essential for the catalytic activity and assembly of complex I. This Macaca fascicularis (Crab-eating macaque) protein is NADH-ubiquinone oxidoreductase chain 5 (MT-ND5).